The chain runs to 128 residues: Probable 4-amino-4-deoxy-L-arabinose-phosphoundecaprenol flippase subunit ArnF (128 aa).

At 1-2 (MC) the chain is on the cytoplasmic side. A helical membrane pass occupies residues 3-23 (LIWGLFSVIIASVAQLSLGFA). The Periplasmic portion of the chain corresponds to 24–35 (ASHLPPMTHLWD). The chain crosses the membrane as a helical span at residues 36-56 (FIAALLAFGLDARILLLGLLG). Topologically, residues 57–76 (YLLSVFCWYKTLHKLALSKA) are cytoplasmic. Residues 77-97 (YALLSMSYVLVWIASMVLPGW) form a helical membrane-spanning segment. Over 98 to 100 (EGT) the chain is Periplasmic. The chain crosses the membrane as a helical span at residues 101 to 121 (FSLKALLGVACIMSGLMLIFL). The Cytoplasmic portion of the chain corresponds to 122-128 (PTTKQRY).

It belongs to the ArnF family. Heterodimer of ArnE and ArnF.

The protein localises to the cell inner membrane. The protein operates within bacterial outer membrane biogenesis; lipopolysaccharide biosynthesis. Its function is as follows. Translocates 4-amino-4-deoxy-L-arabinose-phosphoundecaprenol (alpha-L-Ara4N-phosphoundecaprenol) from the cytoplasmic to the periplasmic side of the inner membrane. The sequence is that of Probable 4-amino-4-deoxy-L-arabinose-phosphoundecaprenol flippase subunit ArnF from Shigella flexneri.